The chain runs to 122 residues: Small ribosomal subunit protein uS13 (122 aa).

The tract at residues 93–122 (RRGLPVRGQRTKTNARTRKGPKKTIAGKKK) is disordered.

It belongs to the universal ribosomal protein uS13 family. Part of the 30S ribosomal subunit. Forms a loose heterodimer with protein S19. Forms two bridges to the 50S subunit in the 70S ribosome.

Its function is as follows. Located at the top of the head of the 30S subunit, it contacts several helices of the 16S rRNA. In the 70S ribosome it contacts the 23S rRNA (bridge B1a) and protein L5 of the 50S subunit (bridge B1b), connecting the 2 subunits; these bridges are implicated in subunit movement. Contacts the tRNAs in the A and P-sites. This is Small ribosomal subunit protein uS13 from Corynebacterium jeikeium (strain K411).